The chain runs to 367 residues: Bi-functional coumaroyl CoA and feruloyl CoA ortho-hydroxylase Diox4 (367 aa).

The Fe2OG dioxygenase domain occupies 207–317 (IREPMLVGSR…RISVPLFVNP (111 aa)). Y223 is a 2-oxoglutarate binding site. 3 residues coordinate Fe cation: H238, D240, and H298. 2-oxoglutarate contacts are provided by R308 and S310.

It belongs to the iron/ascorbate-dependent oxidoreductase family. Requires L-ascorbate as cofactor. Fe(2+) serves as cofactor.

It carries out the reaction (E)-4-coumaroyl-CoA + 2-oxoglutarate + O2 = (E)-2,4-dihydroxycinnamoyl-CoA + succinate + CO2. It catalyses the reaction (E)-feruloyl-CoA + 2-oxoglutarate + O2 = (E)-6-hydroxyferuloyl-CoA + succinate + CO2. It functions in the pathway phenylpropanoid metabolism. With respect to regulation, repressed by the competitive inhibitor psoralen, but not by umbelliferone, xanthotoxin, bergapten and isopimpinellin. Functionally, 2-oxoglutarate (OG)- and Fe(II)-dependent dioxygenase (2OGD) involved in scopoletin and umbelliferone biosynthesis. Converts feruloyl CoA into 6'-hydroxyferuloyl CoA, and p-coumaroyl CoA into 2,4-dihydroxycinnamoyl-CoA. Has no activity with cinnamic acid, caffeic acid, p-coumaric acid, ferulic acid, cinnamoyl-CoA and caffeoyl-CoA. The sequence is that of Bi-functional coumaroyl CoA and feruloyl CoA ortho-hydroxylase Diox4 from Ruta graveolens (Common rue).